Consider the following 907-residue polypeptide: Valine--tRNA ligase (907 aa).

The short motif at 45–55 is the 'HIGH' region element; it reads PNVTGSLHMGH. The short motif at 554–558 is the 'KMSKS' region element; it reads KMSKS. K557 provides a ligand contact to ATP. The stretch at 838 to 870 forms a coiled coil; the sequence is GQLIDLEAERARLMKDVSKIEQDIEKLSAKLSN.

Belongs to the class-I aminoacyl-tRNA synthetase family. ValS type 1 subfamily. Monomer.

Its subcellular location is the cytoplasm. It carries out the reaction tRNA(Val) + L-valine + ATP = L-valyl-tRNA(Val) + AMP + diphosphate. Catalyzes the attachment of valine to tRNA(Val). As ValRS can inadvertently accommodate and process structurally similar amino acids such as threonine, to avoid such errors, it has a 'posttransfer' editing activity that hydrolyzes mischarged Thr-tRNA(Val) in a tRNA-dependent manner. The polypeptide is Valine--tRNA ligase (Bartonella henselae (strain ATCC 49882 / DSM 28221 / CCUG 30454 / Houston 1) (Rochalimaea henselae)).